We begin with the raw amino-acid sequence, 673 residues long: DNA ligase (673 aa).

Residues 34 to 38 (DAEYD), 83 to 84 (SL), and glutamate 116 each bind NAD(+). Catalysis depends on lysine 118, which acts as the N6-AMP-lysine intermediate. NAD(+)-binding residues include arginine 139, glutamate 176, lysine 293, and lysine 317. Zn(2+) contacts are provided by cysteine 411, cysteine 414, cysteine 429, and cysteine 435. One can recognise a BRCT domain in the interval 595 to 673 (NQQNPFFGKT…EDEFLKWVNS (79 aa)).

This sequence belongs to the NAD-dependent DNA ligase family. LigA subfamily. It depends on Mg(2+) as a cofactor. Mn(2+) is required as a cofactor.

The enzyme catalyses NAD(+) + (deoxyribonucleotide)n-3'-hydroxyl + 5'-phospho-(deoxyribonucleotide)m = (deoxyribonucleotide)n+m + AMP + beta-nicotinamide D-nucleotide.. Its function is as follows. DNA ligase that catalyzes the formation of phosphodiester linkages between 5'-phosphoryl and 3'-hydroxyl groups in double-stranded DNA using NAD as a coenzyme and as the energy source for the reaction. It is essential for DNA replication and repair of damaged DNA. In Legionella pneumophila (strain Lens), this protein is DNA ligase.